A 282-amino-acid polypeptide reads, in one-letter code: 4-diphosphocytidyl-2-C-methyl-D-erythritol kinase (282 aa).

Lysine 12 is a catalytic residue. Residue 95-105 participates in ATP binding; that stretch reads PMGGGIGGGSS. Aspartate 137 is a catalytic residue.

Belongs to the GHMP kinase family. IspE subfamily.

The catalysed reaction is 4-CDP-2-C-methyl-D-erythritol + ATP = 4-CDP-2-C-methyl-D-erythritol 2-phosphate + ADP + H(+). The protein operates within isoprenoid biosynthesis; isopentenyl diphosphate biosynthesis via DXP pathway; isopentenyl diphosphate from 1-deoxy-D-xylulose 5-phosphate: step 3/6. Its function is as follows. Catalyzes the phosphorylation of the position 2 hydroxy group of 4-diphosphocytidyl-2C-methyl-D-erythritol. The protein is 4-diphosphocytidyl-2-C-methyl-D-erythritol kinase of Pseudomonas paraeruginosa (strain DSM 24068 / PA7) (Pseudomonas aeruginosa (strain PA7)).